Reading from the N-terminus, the 443-residue chain is MLHPFQSVLLNRDGSLLFCVVKNEIKAFKVEGNGYVLRGEWVDDLDNTPLIKEKVLKEQARQLIENASKKLKTNDGEPVAQPKKQAKVPKPGPGAPPVYQYIRNLALSRDGKLLLACTDSDKAAVIFNIDLDDKDNIFKLIKRQPYPKRPNAITTSVDDKDLILADKFGDVYSMPIQNDVITSINAEKAPILGHVSMLTDVNMLTDSEGKQYIVTADRDEHIRISHYPQSFIVDKWLFGHEEFVSTICIPEWSDKLLFSAGGDKFVFSWNWKTGALLFKFDYTDLIQKYLTSDHLAPERFQNEKGDVIEYSVAKIVTLKDVPYIAFFVEATKVLFVLKVDEKSGALSLHQTLEFDEKIVSLTSALDVNTLCISLDNRDNQDCDLVKLLLLEGDVFIEQKDTNSQLMNTIRSTLKSDLIANVEAGDVYPLYHNASLRKHGEHFS.

A disordered region spans residues 67–93; sequence ASKKLKTNDGEPVAQPKKQAKVPKPGP. 3 WD repeats span residues 97–137, 193–235, and 239–279; these read PVYQ…KDNI, GHVS…IVDK, and GHEE…LLFK.

This sequence belongs to the WD repeat TRM82 family. As to quaternary structure, forms a heterodimer with the catalytic subunit TRM8.

The protein localises to the nucleus. Its pathway is tRNA modification; N(7)-methylguanine-tRNA biosynthesis. In terms of biological role, required for the formation of N(7)-methylguanine at position 46 (m7G46) in tRNA. In the complex, it is required to stabilize and induce conformational changes of the catalytic subunit. In Kluyveromyces lactis (strain ATCC 8585 / CBS 2359 / DSM 70799 / NBRC 1267 / NRRL Y-1140 / WM37) (Yeast), this protein is tRNA (guanine-N(7)-)-methyltransferase non-catalytic subunit TRM82.